The chain runs to 461 residues: Major capsid protein (461 aa).

The span at 1 to 18 (MSTPTISADTTAQNATST) shows a compositional bias: polar residues. The interval 1-22 (MSTPTISADTTAQNATSTEVRE) is disordered.

The protein resides in the virion. Major protein of the capsid. This is Major capsid protein (MCP) from Spodoptera frugiperda ascovirus 1a (SfAV-1a).